We begin with the raw amino-acid sequence, 155 residues long: Small ribosomal subunit protein uS7 (155 aa).

This sequence belongs to the universal ribosomal protein uS7 family. In terms of assembly, part of the 30S ribosomal subunit. Contacts proteins S9 and S11.

One of the primary rRNA binding proteins, it binds directly to 16S rRNA where it nucleates assembly of the head domain of the 30S subunit. Is located at the subunit interface close to the decoding center, probably blocks exit of the E-site tRNA. The polypeptide is Small ribosomal subunit protein uS7 (Pseudothermotoga lettingae (strain ATCC BAA-301 / DSM 14385 / NBRC 107922 / TMO) (Thermotoga lettingae)).